Reading from the N-terminus, the 82-residue chain is Turripeptide Gdm9.1 (82 aa).

Positions 1 to 23 are cleaved as a signal peptide; that stretch reads MMAKLMITVMMVLLLSLQQGADG. Residues 24–46 constitute a propeptide that is removed on maturation; it reads RSERWRKNQMAASRIMRNLITAR. Proline 49 and proline 50 each carry 4-hydroxyproline. 3 cysteine pairs are disulfide-bonded: cysteine 53-cysteine 68, cysteine 58-cysteine 72, and cysteine 64-cysteine 79. Residues glutamate 60 and glutamate 63 each carry the 4-carboxyglutamate modification.

Belongs to the Pg turripeptide superfamily. In terms of tissue distribution, expressed by the venom duct.

It localises to the secreted. In Gemmula diomedea (Gem-turris), this protein is Turripeptide Gdm9.1.